Reading from the N-terminus, the 127-residue chain is UPF0251 protein Ccel_0627 (127 aa).

It belongs to the UPF0251 family.

The protein is UPF0251 protein Ccel_0627 of Ruminiclostridium cellulolyticum (strain ATCC 35319 / DSM 5812 / JCM 6584 / H10) (Clostridium cellulolyticum).